A 248-amino-acid chain; its full sequence is MENFKGLQKSLYIWTDSADLDKRVEQLKAATGGDVALENVHRLSFSSYANSSFDLIVIECAQLTDSYVKLLHMLKPSGKLHLVSFIGPAASLLQEIKLSGFINCREDSPDALSAEKPGYETGSSARLSFAKKNANAANVWKISGDDEELIDEEELLDEEDKQKPDPAGLRVCSTTGKRKACKNCSCGLAEELETEKQSQKATENAKSSCGNCYLGDAFRCSTCPYLGMPAFKPGEKVQLADNLLKSDI.

Positions 4–129 (FKGLQKSLYI…ETGSSARLSF (126 aa)) are N-terminal SAM-like domain. Residues 130–161 (AKKNANAANVWKISGDDEELIDEEELLDEEDK) form a linker region. Positions 172, 181, 184, and 186 each coordinate [2Fe-2S] cluster. The fe-S binding site A stretch occupies residues 172–186 (CSTTGKRKACKNCSC). 4 residues coordinate [4Fe-4S] cluster: Cys-209, Cys-212, Cys-220, and Cys-223. 2 short sequence motifs (cx2C motif) span residues 209–212 (CGNC) and 220–223 (CSTC). A fe-S binding site B region spans residues 209-223 (CGNCYLGDAFRCSTC).

The protein belongs to the anamorsin family. In terms of assembly, monomer. [2Fe-2S] cluster serves as cofactor. The cofactor is [4Fe-4S] cluster.

It localises to the cytoplasm. The protein localises to the mitochondrion intermembrane space. Its function is as follows. Component of the cytosolic iron-sulfur (Fe-S) protein assembly (CIA) machinery. Required for the maturation of extramitochondrial Fe-S proteins. Part of an electron transfer chain functioning in an early step of cytosolic Fe-S biogenesis, facilitating the de novo assembly of a [4Fe-4S] cluster on the cytosolic Fe-S scaffold complex. Electrons are transferred from NADPH via a FAD- and FMN-containing diflavin oxidoreductase. Together with the diflavin oxidoreductase, also required for the assembly of the diferric tyrosyl radical cofactor of ribonucleotide reductase (RNR), probably by providing electrons for reduction during radical cofactor maturation in the catalytic small subunit. This Drosophila sechellia (Fruit fly) protein is Anamorsin homolog.